A 208-amino-acid polypeptide reads, in one-letter code: Guanylate kinase (208 aa).

A Guanylate kinase-like domain is found at 4-182 (GQLYIISAPS…ALEELKSVFR (179 aa)). 11–18 (APSGAGKT) is a binding site for ATP.

This sequence belongs to the guanylate kinase family.

It is found in the cytoplasm. It catalyses the reaction GMP + ATP = GDP + ADP. Functionally, essential for recycling GMP and indirectly, cGMP. This Hahella chejuensis (strain KCTC 2396) protein is Guanylate kinase.